A 333-amino-acid chain; its full sequence is Potassium channel protein 1 (333 aa).

Residues 1 to 6 lie on the Cytoplasmic side of the membrane; that stretch reads METYEK. Residues 7–27 form a helical membrane-spanning segment; sequence IELGIIVIILLILIESVILMT. Residues 28 to 60 are Extracellular-facing; it reads VEGWDFFTAFYTAVVTISTVGYGDYTPQTFLGK. The Selectivity filter motif lies at 46-51; that stretch reads TVGYGD. A helical transmembrane segment spans residues 61 to 81; the sequence is LSVIIYIFAGVGAVAYTMGNI. The Cytoplasmic portion of the chain corresponds to 82–333; the sequence is ASFFIEGHFR…KLKRYVEGVE (252 aa). The region spanning 107–229 is the RCK N-terminal domain; it reads NNHYIICGYG…GADRAVCPYI (123 aa). The RCK C-terminal domain maps to 246–331; it reads EFIHSLVATE…LEKLKRYVEG (86 aa).

Homotetramer.

The protein resides in the cell membrane. Potassium channel protein. Seems to conduct potassium at low membrane potentials. The sequence is that of Potassium channel protein 1 from Methanocaldococcus jannaschii (strain ATCC 43067 / DSM 2661 / JAL-1 / JCM 10045 / NBRC 100440) (Methanococcus jannaschii).